Consider the following 1254-residue polypeptide: DNA polymerase gamma (1254 aa).

A compositionally biased stretch (basic and acidic residues) spans 1125 to 1137 (RKKENRIDDENKK). 2 disordered regions span residues 1125–1145 (RKKE…KKNT) and 1202–1240 (YKKK…TNRN). Residues 1208 to 1217 (QARTASSSPI) show a composition bias toward polar residues. The segment covering 1219–1231 (KTAKAVHSKKLPA) has biased composition (basic residues).

Belongs to the DNA polymerase type-A family. Requires Mg(2+) as cofactor.

The protein localises to the mitochondrion. It carries out the reaction DNA(n) + a 2'-deoxyribonucleoside 5'-triphosphate = DNA(n+1) + diphosphate. Its function is as follows. Involved in the replication of mitochondrial DNA. This chain is DNA polymerase gamma (MIP1), found in Saccharomyces cerevisiae (strain ATCC 204508 / S288c) (Baker's yeast).